The sequence spans 166 residues: Phosphopantetheine adenylyltransferase (166 aa).

Residue S9 coordinates substrate. Residues 9-10 and H17 each bind ATP; that span reads SF. Residues K41, L74, and K88 each contribute to the substrate site. Residues 89–91, E99, and 123–129 contribute to the ATP site; these read GLR and YIHLSST.

Belongs to the bacterial CoaD family. Homohexamer. The cofactor is Mg(2+).

It localises to the cytoplasm. The enzyme catalyses (R)-4'-phosphopantetheine + ATP + H(+) = 3'-dephospho-CoA + diphosphate. It functions in the pathway cofactor biosynthesis; coenzyme A biosynthesis; CoA from (R)-pantothenate: step 4/5. In terms of biological role, reversibly transfers an adenylyl group from ATP to 4'-phosphopantetheine, yielding dephospho-CoA (dPCoA) and pyrophosphate. In Pseudarthrobacter chlorophenolicus (strain ATCC 700700 / DSM 12829 / CIP 107037 / JCM 12360 / KCTC 9906 / NCIMB 13794 / A6) (Arthrobacter chlorophenolicus), this protein is Phosphopantetheine adenylyltransferase.